We begin with the raw amino-acid sequence, 538 residues long: Tryptophan 7-halogenase PrnA (538 aa).

FAD-binding residues include G13, T15, A16, S39, I42, I45, E49, and A50. Residue K79 is part of the active site. Residue K79 participates in 7-chloro-L-tryptophan binding. Residues V187 and L337 each coordinate FAD. E346 serves as a coordination point for 7-chloro-L-tryptophan. Residue E346 coordinates L-tryptophan. The chloride site is built by T348 and G349. I350 is a binding site for FAD. 4 residues coordinate 7-chloro-L-tryptophan: Y443, Y444, E450, and F454. Positions 443, 444, 450, and 454 each coordinate L-tryptophan.

The protein belongs to the flavin-dependent halogenase family. Bacterial tryptophan halogenase subfamily. Homodimer.

It carries out the reaction L-tryptophan + FADH2 + chloride + O2 = 7-chloro-L-tryptophan + FAD + 2 H2O. The protein operates within antibiotic biosynthesis. In terms of biological role, involved in the biosynthesis of the antifungal antibiotic pyrrolnitrin. Catalyzes the chlorination of tryptophan (Trp) at C7 position to yield 7-chloro-L-tryptophan (7-CLT). The protein is Tryptophan 7-halogenase PrnA of Pseudomonas fluorescens.